The primary structure comprises 605 residues: Sulfite reductase [NADPH] flavoprotein alpha-component (605 aa).

In terms of domain architecture, Flavodoxin-like spans 68-206 (VTVLYGSQTG…PAAEWLEGVL (139 aa)). Residues 74–78 (SQTGN), 121–126 (STHGEG), and 154–185 (VLALGDSSYEFFCQTGKEFDQRLEELGGKRIS) contribute to the FMN site. The segment at 213 to 234 (GGGSAAPAPAAASQTGESSYSR) is disordered. The 220-residue stretch at 235-454 (TNPFRAEVLE…VQHNQNFKLP (220 aa)) folds into the FAD-binding FR-type domain. 392 to 395 (RLYS) is an FAD binding site. Residues Asp495 and 525-533 (SRDTEEKVY) each bind NADP(+).

In terms of assembly, alpha(8)-beta(8). The alpha component is a flavoprotein, the beta component is a hemoprotein. Requires FAD as cofactor. FMN is required as a cofactor.

It carries out the reaction hydrogen sulfide + 3 NADP(+) + 3 H2O = sulfite + 3 NADPH + 4 H(+). It functions in the pathway sulfur metabolism; hydrogen sulfide biosynthesis; hydrogen sulfide from sulfite (NADPH route): step 1/1. Functionally, component of the sulfite reductase complex that catalyzes the 6-electron reduction of sulfite to sulfide. This is one of several activities required for the biosynthesis of L-cysteine from sulfate. The flavoprotein component catalyzes the electron flow from NADPH -&gt; FAD -&gt; FMN to the hemoprotein component. This Bacillus subtilis (strain 168) protein is Sulfite reductase [NADPH] flavoprotein alpha-component (cysJ).